The primary structure comprises 394 residues: Phosphoglycerate kinase (394 aa).

Substrate contacts are provided by residues 21–23 (DFN), Arg-36, 59–62 (HLGR), Arg-118, and Arg-151. Ser-183 bears the Phosphoserine mark. Lys-201 provides a ligand contact to ATP. Thr-299 is modified (phosphothreonine). ATP-binding positions include Glu-323 and 350 to 353 (GGDS).

This sequence belongs to the phosphoglycerate kinase family. In terms of assembly, monomer.

It localises to the cytoplasm. It carries out the reaction (2R)-3-phosphoglycerate + ATP = (2R)-3-phospho-glyceroyl phosphate + ADP. It functions in the pathway carbohydrate degradation; glycolysis; pyruvate from D-glyceraldehyde 3-phosphate: step 2/5. In Halalkalibacterium halodurans (strain ATCC BAA-125 / DSM 18197 / FERM 7344 / JCM 9153 / C-125) (Bacillus halodurans), this protein is Phosphoglycerate kinase.